The following is a 192-amino-acid chain: Thymidine kinase (192 aa).

ATP is bound by residues 9 to 16 (SAMNAGKS) and 87 to 90 (DECQ). The active-site Proton acceptor is Glu-88. The Zn(2+) site is built by Cys-145, Cys-147, Cys-182, and His-185.

The protein belongs to the thymidine kinase family. Homotetramer.

It localises to the cytoplasm. It carries out the reaction thymidine + ATP = dTMP + ADP + H(+). The chain is Thymidine kinase from Photobacterium profundum (strain SS9).